Consider the following 774-residue polypeptide: Probable ubiquitin-like-specific protease 2A (774 aa).

A disordered region spans residues 118 to 141; that stretch reads SSLSENDEVSTGEATNPASDPHEV. Catalysis depends on residues His400, Asp430, and Cys485. Residues 548–568 are disordered; that stretch reads ILPANSKSEPPHCGVSNRNDQ.

It belongs to the peptidase C48 family.

Its function is as follows. Protease that catalyzes two essential functions in the SUMO pathway: processing of full-length SUMOs to their mature forms and deconjugation of SUMO from targeted proteins. This chain is Probable ubiquitin-like-specific protease 2A (ULP2A), found in Arabidopsis thaliana (Mouse-ear cress).